We begin with the raw amino-acid sequence, 281 residues long: Small ribosomal subunit protein uS3 (281 aa).

Residues 38–106 (IRRLLSTGLE…QVQLNILEVK (69 aa)) enclose the KH type-2 domain. Residues 218 to 281 (APAGAERARR…VTHEPQIAES (64 aa)) are disordered. Residues 238–256 (SGAAGTTVTGTDAGRAVGG) are compositionally biased toward low complexity.

Belongs to the universal ribosomal protein uS3 family. As to quaternary structure, part of the 30S ribosomal subunit. Forms a tight complex with proteins S10 and S14.

Functionally, binds the lower part of the 30S subunit head. Binds mRNA in the 70S ribosome, positioning it for translation. This Mycobacterium leprae (strain Br4923) protein is Small ribosomal subunit protein uS3.